Consider the following 222-residue polypeptide: Small ribosomal subunit protein uS3 (222 aa).

The 70-residue stretch at Ile-39 to Lys-108 folds into the KH type-2 domain.

It belongs to the universal ribosomal protein uS3 family. In terms of assembly, part of the 30S ribosomal subunit. Forms a tight complex with proteins S10 and S14.

Its function is as follows. Binds the lower part of the 30S subunit head. Binds mRNA in the 70S ribosome, positioning it for translation. This is Small ribosomal subunit protein uS3 from Caldicellulosiruptor bescii (strain ATCC BAA-1888 / DSM 6725 / KCTC 15123 / Z-1320) (Anaerocellum thermophilum).